A 412-amino-acid polypeptide reads, in one-letter code: uncharacterized protein (412 aa).

Helical transmembrane passes span 17–37 (LLLA…ELVI), 54–74 (VLAL…PLLV), 91–111 (MIFI…FFFL), 112–132 (GRAL…AVVG), 146–166 (LIVS…SFIG), 173–193 (WTFW…LLEM), 225–245 (VYIT…SFLG), 257–277 (TAAG…VITG), 299–319 (LLAC…SLFI), 346–366 (VMVF…ALMG), and 375–395 (AAVG…SVFA).

Belongs to the major facilitator superfamily.

The protein resides in the cell membrane. This is an uncharacterized protein from Bacillus subtilis (strain 168).